The sequence spans 136 residues: uncharacterized protein (136 aa).

2 disordered regions span residues 58–82 (TSDD…TTQT) and 112–136 (NNPK…VVTQ).

This is an uncharacterized protein from Dictyostelium discoideum (Social amoeba).